Here is a 366-residue protein sequence, read N- to C-terminus: tRNA-specific 2-thiouridylase MnmA (366 aa).

Residues 6–13 (AMSGGVDS) and Leu32 contribute to the ATP site. Cys101 functions as the Nucleophile in the catalytic mechanism. A disulfide bridge links Cys101 with Cys199. Gly125 contacts ATP. The tract at residues 148–150 (KDQ) is interaction with tRNA. The Cysteine persulfide intermediate role is filled by Cys199.

This sequence belongs to the MnmA/TRMU family.

It is found in the cytoplasm. It catalyses the reaction S-sulfanyl-L-cysteinyl-[protein] + uridine(34) in tRNA + AH2 + ATP = 2-thiouridine(34) in tRNA + L-cysteinyl-[protein] + A + AMP + diphosphate + H(+). Functionally, catalyzes the 2-thiolation of uridine at the wobble position (U34) of tRNA, leading to the formation of s(2)U34. The polypeptide is tRNA-specific 2-thiouridylase MnmA (Leifsonia xyli subsp. xyli (strain CTCB07)).